The sequence spans 162 residues: Caveolin-2 (162 aa).

The Cytoplasmic segment spans residues Met-1–Lys-86. Position 19 is a phosphotyrosine; by SRC (Tyr-19). A phosphoserine mark is found at Ser-20 and Ser-23. The residue at position 27 (Tyr-27) is a Phosphotyrosine; by SRC. Phosphoserine is present on Ser-36. Positions Phe-87–Leu-107 form an intramembrane region, helical. Topologically, residues Ser-108–Asp-162 are cytoplasmic.

It belongs to the caveolin family. Monomer or homodimer. Interacts with CAV1; the interaction forms a stable heterooligomeric complex that is required for targeting to lipid rafts and for caveolae formation. Tyrosine phosphorylated forms do not form heterooligomers with the Tyr-19-phosphorylated form existing as a monomer or dimer, and the Tyr-27-form as a monomer only. Interacts (tyrosine phosphorylated form) with the SH2 domain-containing proteins, RASA1, NCK1 and SRC. Interacts (tyrosine phosphorylated form) with INSR, the interaction (Tyr-27-phosphorylated form) is increased on insulin stimulation. Interacts (Tyr-19 phosphorylated form) with MAPK1 (phosphorylated form); the interaction, promoted by insulin, leads to nuclear location and MAPK1 activation. Interacts with STAT3; the interaction is increased on insulin-induced tyrosine phosphorylation leading to STAT activation. Phosphorylated on serine and tyrosine residues. CAV1 promotes phosphorylation on Ser-23 which then targets the complex to the plasma membrane, lipid rafts and caveolae. Phosphorylation on Ser-36 appears to modulate mitosis in endothelial cells. Phosphorylation on both Tyr-19 and Tyr-27 is required for insulin-induced 'Ser-727' phosphorylation of STAT3 and its activation. Phosphorylation on Tyr-19 is required for insulin-induced phosphorylation of MAPK1 and DNA binding of STAT3. Tyrosine phosphorylation is induced by both EGF and insulin (By. similarity).

It localises to the nucleus. The protein resides in the cytoplasm. It is found in the golgi apparatus membrane. Its subcellular location is the cell membrane. The protein localises to the membrane. It localises to the caveola. Functionally, may act as a scaffolding protein within caveolar membranes. Interacts directly with G-protein alpha subunits and can functionally regulate their activity. Acts as an accessory protein in conjunction with CAV1 in targeting to lipid rafts and driving caveolae formation. The Ser-36 phosphorylated form has a role in modulating mitosis in endothelial cells. Positive regulator of cellular mitogenesis of the MAPK signaling pathway. Required for the insulin-stimulated nuclear translocation and activation of MAPK1 and STAT3, and the subsequent regulation of cell cycle progression. The protein is Caveolin-2 (CAV2) of Loxodonta africana (African elephant).